We begin with the raw amino-acid sequence, 116 residues long: CDKN2AIP N-terminal-like protein (116 aa).

M1 carries the post-translational modification N-acetylmethionine. Residues A24 to S116 form the XRN2-binding (XTBD) domain.

This sequence belongs to the CARF family. As to quaternary structure, interacts with XRN2; the interaction is direct.

The protein is CDKN2AIP N-terminal-like protein (CDKN2AIPNL) of Bos taurus (Bovine).